A 2280-amino-acid polypeptide reads, in one-letter code: Genome polyprotein (2280 aa).

The region spanning 454 to 608 (ETQANNIRST…EEWKKRNPGK (155 aa)) is the SF3 helicase domain. Residue 480-487 (GAPGIGKT) coordinates ATP. O-(5'-phospho-RNA)-tyrosine is present on Y965. One can recognise a Peptidase C24 domain in the interval 1054–1202 (APTAIVEFTQ…TKVAQRVVKE (149 aa)). Active-site for 3CLpro activity residues include H1084, E1105, and C1169. Positions 1442 to 1567 (GVLYCLDYSK…SVCPATASIF (126 aa)) constitute a RdRp catalytic domain. The interval 1722–1746 (GNGSNPEPKQSNNPMVVDPPGTTGP) is disordered. Residues 1723 to 1735 (NGSNPEPKQSNNP) show a composition bias toward polar residues.

As to quaternary structure, homodimer. Homomultimer. Specific enzymatic cleavages in vivo yield mature proteins. Pro-Pol is first autocatalytically cleaved, then processes the whole polyprotein. Post-translationally, VPg is uridylylated by the polymerase and is covalently attached to the 5'-end of the polyadenylated genomic and subgenomic RNAs. This uridylylated form acts as a nucleotide-peptide primer for the polymerase.

It localises to the virion. The protein localises to the host cytoplasm. It catalyses the reaction a ribonucleoside 5'-triphosphate + H2O = a ribonucleoside 5'-diphosphate + phosphate + H(+). The enzyme catalyses RNA(n) + a ribonucleoside 5'-triphosphate = RNA(n+1) + diphosphate. The catalysed reaction is Endopeptidase with a preference for cleavage when the P1 position is occupied by Glu-|-Xaa and the P1' position is occupied by Gly-|-Yaa.. In terms of biological role, together with NTPase and NS4, initiates the formation of the replication complex. Induces the proliferation of the host smooth ER membranes forming long tubular structures. These remodeled membranes probably form the viral factories that contain the replication complex. Its function is as follows. Displays NTPase activity, but no helicase activity. Induces the formation of convoluted membranes derived from the host ER. These remodeled membranes probably form the viral factories that contain the replication complex. Together with NS2 and NS4, initiates the formation of the replication complex. Probable key protein responsible for the formation of membrane alterations by the virus. Induces the formation of convoluted membranes derived from the host ER. These remodeled membranes probably form the viral factories that contain the replication complex. Together with NS2 and NTPase, initiates the formation of the replication complex. Functionally, viral genome-linked protein is covalently linked to the 5'-end of the positive-strand, negative-strand genomic RNAs and subgenomic RNA. Acts as a genome-linked replication primer. May recruit ribosome to viral RNA thereby promoting viral proteins translation. Interacts with host translation initiation complex to allow the translation of viral proteins. In terms of biological role, protease-polymerase p76 processes the polyprotein: Pro-Pol is first released by autocleavage, then all other proteins are cleaved. Cleaves host translation initiation factor eIF4G1, eIF4G2 and PABP1 thereby inducing a shutdown of host protein synthesis. This shutdown may not prevent viral mRNA from being translated since viral Vpg replaces the cap. It is also an RNA-directed RNA polymerase which replicates genomic and antigenomic viral RNA by recognizing specific signals. Also transcribes a subgenomic mRNA by initiating RNA synthesis internally on antigenomic RNA. This sgRNA codes for structural proteins. Catalyzes the covalent attachment VPg with viral RNAs. Its function is as follows. Capsid protein self assembles to form an icosahedral capsid with a T=3 symmetry, about 38 nm in diameter, and consisting of 180 capsid proteins. The capsid encapsulate the genomic RNA and VP2 proteins. Attaches virion to target cells, inducing endocytosis of the viral particle. Acidification of the endosome induces conformational change of capsid protein thereby injecting virus genomic RNA into host cytoplasm. This is Genome polyprotein from Sapporo virus (isolate GI/Human/Germany/pJG-Sap01) (Hu/Dresden/pJG-Sap01/DE).